The chain runs to 62 residues: Large ribosomal subunit protein bL32 (62 aa).

The span at 1-16 (MAVPKRKTSPMKRGFR) shows a compositional bias: basic residues. The segment at 1-62 (MAVPKRKTSP…QILTPKNKEA (62 aa)) is disordered. Residues 28 to 44 (VEDKDSGELRRPHHVDL) show a composition bias toward basic and acidic residues.

It belongs to the bacterial ribosomal protein bL32 family.

The polypeptide is Large ribosomal subunit protein bL32 (Methylocella silvestris (strain DSM 15510 / CIP 108128 / LMG 27833 / NCIMB 13906 / BL2)).